Consider the following 443-residue polypeptide: MQVSVETLEGLERKVTVSVPTEKVEEEVSSRLRNLARKVKIDGFRPGKVPFNVVKSRFSDSVREEVAREMVQSTLYEALQKNELVPAGYPHVEPLEIEPGKDFKYTAVFEVMPVFEVVELNQAPVELIQSEVSDKDVDNMIEKLREQNKEWHEVTHAVKKGDKVVIDFQGFLDDKPFQGGSAEGYELVIGSGSMIPGFEDGIIGGKIDKPLDIKVSFPEDYGHKDLAGKEATFKITIKKIMEGKLPALDEAFAEKFNIKEGGIESLKKDIRENMARELERRVNMMNREKLFDSLMSVNHVELPIALIDKEIEHLKHDMYHRLFGHEHKDDEKIPDFPRELFEEQAKRRVHLGLLFAEYVKKHEIVADNDKVNAMIDKFASAYESPDELRAWYQSSKEHMAEVEALVMEDMVADKIAEDAKLKYKNMDYDSVMNPKKGTEKKGE.

One can recognise a PPIase FKBP-type domain in the interval 161-246 (GDKVVIDFQG…IKKIMEGKLP (86 aa)).

This sequence belongs to the FKBP-type PPIase family. Tig subfamily.

It localises to the cytoplasm. The enzyme catalyses [protein]-peptidylproline (omega=180) = [protein]-peptidylproline (omega=0). Its function is as follows. Involved in protein export. Acts as a chaperone by maintaining the newly synthesized protein in an open conformation. Functions as a peptidyl-prolyl cis-trans isomerase. In Legionella pneumophila (strain Lens), this protein is Trigger factor.